Reading from the N-terminus, the 345-residue chain is Proto-oncogene serine/threonine-protein kinase mos (345 aa).

The Protein kinase domain maps to 63–344; the sequence is VCLLQRLGAG…LDLRALQAEL (282 aa). ATP is bound by residues 69-77 and Lys-90; that span reads LGAGGFGSV. Asp-202 acts as the Proton acceptor in catalysis.

This sequence belongs to the protein kinase superfamily. Ser/Thr protein kinase family. As to quaternary structure, interacts with MAP2K1/MEK1. In terms of tissue distribution, restricted to gonadal tissues.

It is found in the cytoplasm. It carries out the reaction L-seryl-[protein] + ATP = O-phospho-L-seryl-[protein] + ADP + H(+). It catalyses the reaction L-threonyl-[protein] + ATP = O-phospho-L-threonyl-[protein] + ADP + H(+). Serine/threonine kinase involved in the regulation of MAPK signaling. Is an activator of the ERK1/2 signaling cascade playing an essential role in the stimulation of oocyte maturation. This is Proto-oncogene serine/threonine-protein kinase mos from Sus scrofa (Pig).